Here is an 80-residue protein sequence, read N- to C-terminus: Putative defensin-like protein 23 (80 aa).

Residues 1–25 (MTTTMKIMSFAMLLVLLFSIDVVEG) form the signal peptide. Intrachain disulfides connect cysteine 31–cysteine 80, cysteine 41–cysteine 66, cysteine 50–cysteine 76, and cysteine 54–cysteine 78.

Belongs to the DEFL family.

It localises to the secreted. The chain is Putative defensin-like protein 23 from Arabidopsis thaliana (Mouse-ear cress).